A 388-amino-acid chain; its full sequence is Mannitol-1-phosphate 5-dehydrogenase (388 aa).

5-16 serves as a coordination point for NAD(+); that stretch reads AIQFGGGNIGRG. Lys-213 is an active-site residue.

The protein belongs to the mannitol dehydrogenase family. Monomer.

It carries out the reaction D-mannitol 1-phosphate + NAD(+) = beta-D-fructose 6-phosphate + NADH + H(+). Functionally, catalyzes the NAD(H)-dependent interconversion of D-fructose 6-phosphate and D-mannitol 1-phosphate in the mannitol metabolic pathway. Has a strong preference for NADH over NADPH. Required for protection of conidiospores against exogenous stresses such as high temperatures and an oxidative environment. The sequence is that of Mannitol-1-phosphate 5-dehydrogenase (mpdA) from Aspergillus niger.